The following is a 373-amino-acid chain: Queuine tRNA-ribosyltransferase (373 aa).

D90 (proton acceptor) is an active-site residue. Substrate contacts are provided by residues 90–94 (DSGGF), D144, Q193, and G220. The interval 251-257 (GVGTPED) is RNA binding. The Nucleophile role is filled by D270. The segment at 275 to 279 (TRNAR) is RNA binding; important for wobble base 34 recognition. Zn(2+)-binding residues include C308, C310, C313, and H339.

Belongs to the queuine tRNA-ribosyltransferase family. In terms of assembly, homodimer. Within each dimer, one monomer is responsible for RNA recognition and catalysis, while the other monomer binds to the replacement base PreQ1. Requires Zn(2+) as cofactor.

The catalysed reaction is 7-aminomethyl-7-carbaguanine + guanosine(34) in tRNA = 7-aminomethyl-7-carbaguanosine(34) in tRNA + guanine. Its pathway is tRNA modification; tRNA-queuosine biosynthesis. In terms of biological role, catalyzes the base-exchange of a guanine (G) residue with the queuine precursor 7-aminomethyl-7-deazaguanine (PreQ1) at position 34 (anticodon wobble position) in tRNAs with GU(N) anticodons (tRNA-Asp, -Asn, -His and -Tyr). Catalysis occurs through a double-displacement mechanism. The nucleophile active site attacks the C1' of nucleotide 34 to detach the guanine base from the RNA, forming a covalent enzyme-RNA intermediate. The proton acceptor active site deprotonates the incoming PreQ1, allowing a nucleophilic attack on the C1' of the ribose to form the product. After dissociation, two additional enzymatic reactions on the tRNA convert PreQ1 to queuine (Q), resulting in the hypermodified nucleoside queuosine (7-(((4,5-cis-dihydroxy-2-cyclopenten-1-yl)amino)methyl)-7-deazaguanosine). The polypeptide is Queuine tRNA-ribosyltransferase (Campylobacter jejuni (strain RM1221)).